The sequence spans 570 residues: MFS-type transporter pigP (570 aa).

The segment at 14–54 (GMIKKAHPEQTPPDVSHEGDVATEKGDSDGVEQAAPTGPTD) is disordered. Residues 28-41 (VSHEGDVATEKGDS) are compositionally biased toward basic and acidic residues. Helical transmembrane passes span 65–85 (VMIMSGITLVCFLMLLDTSII), 99–119 (LPDVGWYGSAYLLASASLVPL), 131–151 (WSFVSFFAVFELGSLLCGVAT), 162–182 (VAGMGGSGIQNGAFTIIAGCV), 192–212 (GLLMGFAQLGIVIGPLIGGAF), 221–241 (CFYINLPIGAVVGLLLFFVHI), and 263–283 (LVGFVLFAPAAVQFLLALQYG). An N-linked (GlcNAc...) asparagine glycan is attached at Asn290. 7 consecutive transmembrane segments (helical) span residues 293 to 313 (VVIGLFCGAGATFVCFILWEW), 336 to 356 (VVYGFLMATLLVASYYLPIYF), 369 to 389 (VYILPSILSQSALAIISGALV), 392 to 412 (FGYYLPWSLAGGIVSSVGNGL), 425 to 445 (WIGYQILLGAGRGAGLQMPII), 455 to 475 (LIPVAMALIMFCQSFFGSTFL), and 533 to 553 (VFYLAVGAAVATFVFSCGMGW).

It belongs to the major facilitator superfamily. TCR/Tet family.

It is found in the cell membrane. In terms of biological role, MFS-type transporter; part of the gene cluster that mediates the biosynthesis of azaphilone pigments (MonAzPs), very widely used as food colorant. This chain is MFS-type transporter pigP, found in Monascus ruber (Mold).